A 759-amino-acid polypeptide reads, in one-letter code: Protein YdeP (759 aa).

Residues C49 and C52 each contribute to the [4Fe-4S] cluster site.

Belongs to the prokaryotic molybdopterin-containing oxidoreductase family. [4Fe-4S] cluster is required as a cofactor. The cofactor is Mo-bis(molybdopterin guanine dinucleotide).

Its function is as follows. Probably involved in acid resistance. The protein is Protein YdeP (ydeP) of Shigella flexneri.